The sequence spans 119 residues: Protein Wnt-4 (119 aa).

The O-palmitoleoyl serine; by PORCN moiety is linked to residue serine 1. Disulfide bonds link cysteine 69-cysteine 100 and cysteine 85-cysteine 95. N-linked (GlcNAc...) asparagine glycosylation is present at asparagine 86.

The protein belongs to the Wnt family. In terms of processing, palmitoleoylation is required for efficient binding to frizzled receptors. Depalmitoleoylation leads to Wnt signaling pathway inhibition.

The protein localises to the secreted. Its subcellular location is the extracellular space. It localises to the extracellular matrix. Functionally, ligand for members of the frizzled family of seven transmembrane receptors. Plays an important role in embryonic development. This chain is Protein Wnt-4 (WNT-4), found in Sceloporus occidentalis (Western fence lizard).